Consider the following 92-residue polypeptide: Small ribosomal subunit protein uS19c (92 aa).

This sequence belongs to the universal ribosomal protein uS19 family.

It localises to the plastid. Its subcellular location is the cyanelle. Protein S19 forms a complex with S13 that binds strongly to the 16S ribosomal RNA. This is Small ribosomal subunit protein uS19c (rps19) from Cyanophora paradoxa.